The sequence spans 198 residues: MNIKNLNQIPIVVEQSARGERAYDIYSRLLKERIIFLVGPIEDYMANVVVAQLLFLESENPDKDIHLYINSPGGSVSAGLAIYDTMQFIKSDISTLCIGQAASMGALLLTAGTKGKRFALPNVRCMIHQPLGGFSGQASDVDIHAQEILKVRANLNQIFKLHTGQVIKTIQKDTDRDNFMSADEATKYGLIDKVLAKR.

Ser103 acts as the Nucleophile in catalysis. The active site involves His128.

It belongs to the peptidase S14 family. In terms of assembly, fourteen ClpP subunits assemble into 2 heptameric rings which stack back to back to give a disk-like structure with a central cavity, resembling the structure of eukaryotic proteasomes.

The protein localises to the cytoplasm. The enzyme catalyses Hydrolysis of proteins to small peptides in the presence of ATP and magnesium. alpha-casein is the usual test substrate. In the absence of ATP, only oligopeptides shorter than five residues are hydrolyzed (such as succinyl-Leu-Tyr-|-NHMec, and Leu-Tyr-Leu-|-Tyr-Trp, in which cleavage of the -Tyr-|-Leu- and -Tyr-|-Trp bonds also occurs).. In terms of biological role, cleaves peptides in various proteins in a process that requires ATP hydrolysis. Has a chymotrypsin-like activity. Plays a major role in the degradation of misfolded proteins. This chain is ATP-dependent Clp protease proteolytic subunit, found in Vesicomyosocius okutanii subsp. Calyptogena okutanii (strain HA).